The following is a 124-amino-acid chain: Small ribosomal subunit protein uS12 (124 aa).

Residue aspartate 89 is modified to 3-methylthioaspartic acid.

This sequence belongs to the universal ribosomal protein uS12 family. In terms of assembly, part of the 30S ribosomal subunit. Contacts proteins S8 and S17. May interact with IF1 in the 30S initiation complex.

In terms of biological role, with S4 and S5 plays an important role in translational accuracy. Its function is as follows. Interacts with and stabilizes bases of the 16S rRNA that are involved in tRNA selection in the A site and with the mRNA backbone. Located at the interface of the 30S and 50S subunits, it traverses the body of the 30S subunit contacting proteins on the other side and probably holding the rRNA structure together. The combined cluster of proteins S8, S12 and S17 appears to hold together the shoulder and platform of the 30S subunit. The protein is Small ribosomal subunit protein uS12 of Psychrobacter arcticus (strain DSM 17307 / VKM B-2377 / 273-4).